We begin with the raw amino-acid sequence, 427 residues long: Vitamin D3 receptor (427 aa).

The segment at residues 21–96 is a DNA-binding region (nuclear receptor); sequence PRICGVCGDR…IGMMKEFILT (76 aa). Residues Cys-24, Cys-27, Cys-41, Cys-44, Cys-60, Cys-66, Cys-76, and Cys-79 each contribute to the Zn(2+) site. 2 NR C4-type zinc fingers span residues 24–44 and 60–79; these read CGVC…CEGC and CPFN…CQAC. A hinge region spans residues 97-126; it reads DEEVQRKREMILKRKEEEALKDSLRPKLSE. The NR LBD domain occupies 127 to 423; that stretch reads EQQRIIAILL…LTPLVLEVFG (297 aa). Tyr-143 contributes to the calcitriol binding site. Residues 149 to 201 are disordered; it reads DFGQFRPPVRGDEEEGTLPSRSSSAHAPSFSGSSSSSCSDQYTSSPDTMEPAS. Low complexity predominate over residues 168-193; the sequence is SRSSSAHAPSFSGSSSSSCSDQYTSS. Ser-237 is a calcitriol binding site. Residues 246-264 form an interaction with coactivator LXXLL motif region; the sequence is KMIPGFRDLTAEDQIVLLK. 4 residues coordinate calcitriol: Arg-274, Ser-278, His-305, and His-397. The 9aaTAD motif lies at 416 to 424; the sequence is PLVLEVFGN.

Belongs to the nuclear hormone receptor family. NR1 subfamily. As to quaternary structure, homodimer in the absence of bound vitamin D3. Heterodimer with RXRA after vitamin D3 binding. Interacts with MED1, NCOA1, NCOA2, NCOA3 and NCOA6 coactivators, leading to a strong increase of transcription of target genes. Interacts with the corepressor NCOR1. Interacts with SNW1. Interacts with IRX4, the interaction does not affect its transactivation activity. Interacts with CRY1. Interacts with CRY2 in a ligand-dependent manner. In terms of processing, ubiquitinated by UBR5, leading to its degradation: UBR5 specifically recognizes and binds ligand-bound VDR when it is not associated with coactivators (NCOAs). In presence of NCOAs, the UBR5-degron is not accessible, preventing its ubiquitination and degradation.

The protein resides in the nucleus. Its subcellular location is the cytoplasm. Nuclear receptor for calcitriol, the active form of vitamin D3 which mediates the action of this vitamin on cells. Enters the nucleus upon vitamin D3 binding where it forms heterodimers with the retinoid X receptor/RXR. The VDR-RXR heterodimers bind to specific response elements on DNA and activate the transcription of vitamin D3-responsive target genes. Plays a central role in calcium homeostasis. Also functions as a receptor for the secondary bile acid lithocholic acid (LCA) and its metabolites. In Sus scrofa (Pig), this protein is Vitamin D3 receptor (VDR).